Consider the following 480-residue polypeptide: Pyruvate kinase (480 aa).

Residue Arg36 participates in substrate binding. Positions 38, 40, and 70 each coordinate K(+). An ATP-binding site is contributed by 38–41 (NFSH). Positions 77 and 160 each coordinate ATP. Glu225 provides a ligand contact to Mg(2+). Positions 251, 252, and 284 each coordinate substrate. Position 252 (Asp252) interacts with Mg(2+).

Belongs to the pyruvate kinase family. Homotetramer. Requires Mg(2+) as cofactor. The cofactor is K(+).

The catalysed reaction is pyruvate + ATP = phosphoenolpyruvate + ADP + H(+). Its pathway is carbohydrate degradation; glycolysis; pyruvate from D-glyceraldehyde 3-phosphate: step 5/5. With respect to regulation, allosterically activated by AMP and by several sugar phosphates. Belongs to type II PK. The protein is Pyruvate kinase (pykA) of Buchnera aphidicola subsp. Acyrthosiphon pisum (strain APS) (Acyrthosiphon pisum symbiotic bacterium).